The chain runs to 632 residues: Effector protein hopAD1 (632 aa).

Residues 13-34 (TAVDSSLPTSATSQTISNTKSR) are disordered. Polar residues predominate over residues 15–32 (VDSSLPTSATSQTISNTK).

The protein localises to the secreted. In Pseudomonas syringae pv. tomato (strain ATCC BAA-871 / DC3000), this protein is Effector protein hopAD1 (hopAD1).